The sequence spans 145 residues: MALRLILGFDYGTKQIGVAVGQVITGQARELCTLKAQNGVPDWNQVEALIKEWKPDAVVVGLPLNMDGTPSEMCARAEKFARRLNGRFNLPFYTHDERLTTFEAKGERLVRGGQKGSYRDNPVDAIAAALLLQGWLDENTALFES.

Belongs to the YqgF nuclease family.

Its subcellular location is the cytoplasm. Its function is as follows. Could be a nuclease involved in processing of the 5'-end of pre-16S rRNA. This chain is Putative pre-16S rRNA nuclease, found in Pseudomonas fluorescens (strain Pf0-1).